The following is a 725-amino-acid chain: ATP-dependent rRNA helicase SPB4 (725 aa).

Positions 15-43 (WAKLNPPLSPWILDVINSMGFKNMTPVQA) match the Q motif motif. In terms of domain architecture, Helicase ATP-binding spans 46-260 (IPRAVKNQDC…GLGLRNPVRI (215 aa)). 59–66 (AVTGSGKT) serves as a coordination point for ATP. The disordered stretch occupies residues 119–156 (ESEEETGDVEAHAPPFASSSRSPSPQTPDKPLFPLPML). A compositionally biased stretch (low complexity) spans 132 to 142 (PPFASSSRSPS). The segment covering 143–152 (PQTPDKPLFP) has biased composition (pro residues). The DEAD box signature appears at 207–210 (DEAD). A Helicase C-terminal domain is found at 295–458 (KTLQLIRLLL…YINAYLEEVD (164 aa)). The disordered stretch occupies residues 591 to 725 (AQRADNQSSN…IGGGMFDDLE (135 aa)). Basic and acidic residues-rich tracts occupy residues 603-646 (ARAE…KYEW) and 685-707 (EIGK…KESS). The span at 709–725 (GGAGGGGIGGGMFDDLE) shows a compositional bias: gly residues.

Belongs to the DEAD box helicase family. DDX55/SPB4 subfamily. As to quaternary structure, component of pre-60S ribosomal complexes.

It localises to the nucleus. The protein resides in the nucleolus. It catalyses the reaction ATP + H2O = ADP + phosphate + H(+). Functionally, ATP-binding RNA helicase involved in the biogenesis of 60S ribosomal subunits. Binds 90S pre-ribosomal particles and dissociates from pre-60S ribosomal particles after processing of 27SB pre-rRNA. Required for the normal formation of 18S rRNA through the processing of pre-rRNAs at sites A0, A1 and A2, and the normal formation of 25S and 5.8S rRNAs through the processing of pre-rRNAs at sites C1 and C2. The chain is ATP-dependent rRNA helicase SPB4 from Cryptococcus neoformans var. neoformans serotype D (strain JEC21 / ATCC MYA-565) (Filobasidiella neoformans).